We begin with the raw amino-acid sequence, 666 residues long: uncharacterized protein (666 aa).

The 291-residue stretch at 263 to 553 (RFDLTTLKTY…THFQMKAYLR (291 aa)) folds into the RNB domain.

It belongs to the RNR ribonuclease family.

This is an uncharacterized protein from Synechocystis sp. (strain ATCC 27184 / PCC 6803 / Kazusa).